The chain runs to 180 residues: Putative adenylate kinase (180 aa).

Residues G10, G12, K13, T14, and T15 each coordinate ATP. Residues 30–50 (NLRDFALEKGIGEVKGDELEV) form an NMP region. An LID region spans residues 99-109 (ERGYSKDKIGE). ATP is bound by residues R100 and K138.

It belongs to the adenylate kinase family. AK6 subfamily. Interacts with uS11. Not a structural component of 40S pre-ribosomes, but transiently interacts with them by binding to uS11.

The enzyme catalyses AMP + ATP = 2 ADP. It catalyses the reaction ATP + H2O = ADP + phosphate + H(+). Its function is as follows. Broad-specificity nucleoside monophosphate (NMP) kinase that catalyzes the reversible transfer of the terminal phosphate group between nucleoside triphosphates and monophosphates. Also has ATPase activity. Involved in the late maturation steps of the 30S ribosomal particles, specifically 16S rRNA maturation. While NMP activity is not required for ribosome maturation, ATPase activity is. Associates transiently with small ribosomal subunit protein uS11. ATP hydrolysis breaks the interaction with uS11. May temporarily remove uS11 from the ribosome to enable a conformational change of the ribosomal RNA that is needed for the final maturation step of the small ribosomal subunit. The sequence is that of Putative adenylate kinase from Pyrococcus furiosus (strain ATCC 43587 / DSM 3638 / JCM 8422 / Vc1).